A 222-amino-acid chain; its full sequence is Cell division protein FtsQ (222 aa).

The Cytoplasmic portion of the chain corresponds to 1–5; the sequence is MNKKV. Residues 6 to 26 form a helical membrane-spanning segment; that stretch reads IAIVVGVVVVLVAILGVVAWF. The Extracellular portion of the chain corresponds to 27-222; that stretch reads VPILKVGNIE…ISSPSMVTVR (196 aa). Residues 30 to 98 form the POTRA domain; sequence LKVGNIEVTG…STITVELTER (69 aa).

The protein belongs to the FtsQ/DivIB family. FtsQ subfamily.

The protein localises to the cell membrane. Essential cell division protein. This Corynebacterium glutamicum (strain ATCC 13032 / DSM 20300 / JCM 1318 / BCRC 11384 / CCUG 27702 / LMG 3730 / NBRC 12168 / NCIMB 10025 / NRRL B-2784 / 534) protein is Cell division protein FtsQ.